We begin with the raw amino-acid sequence, 351 residues long: MKKIRVICVDDSALVRGLMTEIINSHPDMEVVATAPDPLVARELIKQHNPDVLTLDVEMPRMDGLDFLEKLMRLRPMPVVMVSSLTERGGEITMRALELGAIDFVTKPRLGIRDGLLDYSELIADKIRAASRARLRGPAPVAAAALPARLRSPLNSSEKLVILGASTGGTEAIREVLLPLPPDSPAILITQHMPAGFTRSFAQRLDTLCAVTVREATHGERVLPGHVYLAPGGEQHMKLGRSGANYVIELEAGEPVNRHRPSVDVLFHSAAQAAGRNAIGVLLTGMGKDGAAGLLAMKRAGAYTLAQDEASCVVFGMPREAILLGAADEVVPLPAMSERILMRAGDRGHRV.

Residues 5–122 (RVICVDDSAL…RDGLLDYSEL (118 aa)) enclose the Response regulatory domain. Asp56 carries the post-translational modification 4-aspartylphosphate. Positions 154-341 (LNSSEKLVIL…PLPAMSERIL (188 aa)) constitute a CheB-type methylesterase domain. Catalysis depends on residues Ser166, His192, and Asp289.

Belongs to the CheB family. In terms of processing, phosphorylated by CheA. Phosphorylation of the N-terminal regulatory domain activates the methylesterase activity.

It localises to the cytoplasm. It carries out the reaction [protein]-L-glutamate 5-O-methyl ester + H2O = L-glutamyl-[protein] + methanol + H(+). The enzyme catalyses L-glutaminyl-[protein] + H2O = L-glutamyl-[protein] + NH4(+). In terms of biological role, involved in chemotaxis. Part of a chemotaxis signal transduction system that modulates chemotaxis in response to various stimuli. Catalyzes the demethylation of specific methylglutamate residues introduced into the chemoreceptors (methyl-accepting chemotaxis proteins or MCP) by CheR. Also mediates the irreversible deamidation of specific glutamine residues to glutamic acid. The polypeptide is Protein-glutamate methylesterase/protein-glutamine glutaminase 2 (Bordetella avium (strain 197N)).